The sequence spans 702 residues: Ferrioxamine B receptor (702 aa).

Positions 1–30 (MPLEMFMFATTRMALLIGGAIGGATFPLFA) are cleaved as a signal peptide. The TBDR plug domain maps to 55–168 (PDIETPQSVS…PGGIVALTSR (114 aa)). The TBDR beta-barrel domain occupies 173–702 (DAGGEVKLFA…SIVGSVSWAF (530 aa)).

This sequence belongs to the TonB-dependent receptor family.

The protein localises to the cell outer membrane. Functionally, ferrioxamine binding and uptake, in association with the TonB protein. The sequence is that of Ferrioxamine B receptor (foxA) from Salmonella typhimurium (strain LT2 / SGSC1412 / ATCC 700720).